Consider the following 424-residue polypeptide: Enolase (424 aa).

Q162 provides a ligand contact to (2R)-2-phosphoglycerate. E204 serves as the catalytic Proton donor. 3 residues coordinate Mg(2+): D241, E284, and D311. 4 residues coordinate (2R)-2-phosphoglycerate: K336, R365, S366, and K387. K336 serves as the catalytic Proton acceptor.

This sequence belongs to the enolase family. The cofactor is Mg(2+).

It localises to the cytoplasm. It is found in the secreted. Its subcellular location is the cell surface. The catalysed reaction is (2R)-2-phosphoglycerate = phosphoenolpyruvate + H2O. Its pathway is carbohydrate degradation; glycolysis; pyruvate from D-glyceraldehyde 3-phosphate: step 4/5. Functionally, catalyzes the reversible conversion of 2-phosphoglycerate (2-PG) into phosphoenolpyruvate (PEP). It is essential for the degradation of carbohydrates via glycolysis. The chain is Enolase from Parvibaculum lavamentivorans (strain DS-1 / DSM 13023 / NCIMB 13966).